Reading from the N-terminus, the 249-residue chain is Ditrans,polycis-undecaprenyl-diphosphate synthase ((2E,6E)-farnesyl-diphosphate specific) (249 aa).

The active site involves aspartate 29. Aspartate 29 serves as a coordination point for Mg(2+). Substrate-binding positions include 30–33, tryptophan 34, arginine 42, histidine 46, and 74–76; these read GNGR and STE. The Proton acceptor role is filled by asparagine 77. Residues tryptophan 78, arginine 80, arginine 197, and 203–205 each bind substrate; that span reads RLS. Mg(2+) is bound at residue glutamate 216.

This sequence belongs to the UPP synthase family. Homodimer. It depends on Mg(2+) as a cofactor.

It carries out the reaction 8 isopentenyl diphosphate + (2E,6E)-farnesyl diphosphate = di-trans,octa-cis-undecaprenyl diphosphate + 8 diphosphate. Generates ditrans,octacis-undecaprenyl pyrophosphate (UPP) from isopentenyl pyrophosphate (IPP) and farnesyl diphosphate. UPP is the precursor of glycosyl carrier lipid in the biosynthesis of bacterial cell wall polysaccharide components such as peptidoglycan and lipopolysaccharide. In Micrococcus luteus (Micrococcus lysodeikticus), this protein is Ditrans,polycis-undecaprenyl-diphosphate synthase ((2E,6E)-farnesyl-diphosphate specific) (uppS).